The chain runs to 81 residues: Photosystem I iron-sulfur center (81 aa).

2 consecutive 4Fe-4S ferredoxin-type domains span residues 2 to 31 (AHSV…MIPW) and 39 to 68 (IASA…VRVY). The [4Fe-4S] cluster site is built by Cys-11, Cys-14, Cys-17, Cys-21, Cys-48, Cys-51, Cys-54, and Cys-58.

The eukaryotic PSI reaction center is composed of at least 11 subunits. [4Fe-4S] cluster serves as cofactor.

The protein resides in the plastid. The protein localises to the chloroplast thylakoid membrane. The catalysed reaction is reduced [plastocyanin] + hnu + oxidized [2Fe-2S]-[ferredoxin] = oxidized [plastocyanin] + reduced [2Fe-2S]-[ferredoxin]. In terms of biological role, apoprotein for the two 4Fe-4S centers FA and FB of photosystem I (PSI); essential for photochemical activity. FB is the terminal electron acceptor of PSI, donating electrons to ferredoxin. The C-terminus interacts with PsaA/B/D and helps assemble the protein into the PSI complex. Required for binding of PsaD and PsaE to PSI. PSI is a plastocyanin-ferredoxin oxidoreductase, converting photonic excitation into a charge separation, which transfers an electron from the donor P700 chlorophyll pair to the spectroscopically characterized acceptors A0, A1, FX, FA and FB in turn. This chain is Photosystem I iron-sulfur center, found in Pinus thunbergii (Japanese black pine).